Reading from the N-terminus, the 139-residue chain is 3-hydroxyacyl-[acyl-carrier-protein] dehydratase FabZ (139 aa).

His46 is a catalytic residue.

It belongs to the thioester dehydratase family. FabZ subfamily.

The protein resides in the cytoplasm. It catalyses the reaction a (3R)-hydroxyacyl-[ACP] = a (2E)-enoyl-[ACP] + H2O. Involved in unsaturated fatty acids biosynthesis. Catalyzes the dehydration of short chain beta-hydroxyacyl-ACPs and long chain saturated and unsaturated beta-hydroxyacyl-ACPs. This chain is 3-hydroxyacyl-[acyl-carrier-protein] dehydratase FabZ, found in Petrotoga mobilis (strain DSM 10674 / SJ95).